Here is a 451-residue protein sequence, read N- to C-terminus: Probable asparagine--tRNA ligase, cytoplasmic (451 aa).

It belongs to the class-II aminoacyl-tRNA synthetase family.

It is found in the cytoplasm. It catalyses the reaction tRNA(Asn) + L-asparagine + ATP = L-asparaginyl-tRNA(Asn) + AMP + diphosphate + H(+). The chain is Probable asparagine--tRNA ligase, cytoplasmic from Encephalitozoon cuniculi (strain GB-M1) (Microsporidian parasite).